A 571-amino-acid polypeptide reads, in one-letter code: Urease subunit alpha (571 aa).

Positions 134 to 571 constitute a Urease domain; it reads GAIDTHIHFI…LPMAQRYFLF (438 aa). Ni(2+)-binding residues include histidine 139, histidine 141, and lysine 222. An N6-carboxylysine modification is found at lysine 222. Histidine 224 serves as a coordination point for substrate. 2 residues coordinate Ni(2+): histidine 251 and histidine 277. The active-site Proton donor is histidine 325. A Ni(2+)-binding site is contributed by aspartate 365.

Belongs to the metallo-dependent hydrolases superfamily. Urease alpha subunit family. In terms of assembly, heterotrimer of UreA (gamma), UreB (beta) and UreC (alpha) subunits. Three heterotrimers associate to form the active enzyme. It depends on Ni cation as a cofactor. Post-translationally, carboxylation allows a single lysine to coordinate two nickel ions.

It localises to the cytoplasm. It catalyses the reaction urea + 2 H2O + H(+) = hydrogencarbonate + 2 NH4(+). The protein operates within nitrogen metabolism; urea degradation; CO(2) and NH(3) from urea (urease route): step 1/1. The protein is Urease subunit alpha of Bordetella parapertussis (strain 12822 / ATCC BAA-587 / NCTC 13253).